The following is a 241-amino-acid chain: 2,3,4,5-tetrahydropyridine-2,6-dicarboxylate N-acetyltransferase (241 aa).

The protein belongs to the transferase hexapeptide repeat family. DapH subfamily.

The enzyme catalyses (S)-2,3,4,5-tetrahydrodipicolinate + acetyl-CoA + H2O = L-2-acetamido-6-oxoheptanedioate + CoA. It participates in amino-acid biosynthesis; L-lysine biosynthesis via DAP pathway; LL-2,6-diaminopimelate from (S)-tetrahydrodipicolinate (acetylase route): step 1/3. Catalyzes the transfer of an acetyl group from acetyl-CoA to tetrahydrodipicolinate. This chain is 2,3,4,5-tetrahydropyridine-2,6-dicarboxylate N-acetyltransferase, found in Thermoanaerobacter pseudethanolicus (strain ATCC 33223 / 39E) (Clostridium thermohydrosulfuricum).